A 146-amino-acid polypeptide reads, in one-letter code: Hemoglobin subunit beta (146 aa).

Residues 2-146 form the Globin domain; that stretch reads QWSESERTII…VVSALGKQYH (145 aa). Positions 63 and 92 each coordinate heme b.

It belongs to the globin family. In terms of assembly, heterotetramer of two alpha chains and two beta chains. As to expression, red blood cells.

In terms of biological role, involved in oxygen transport from gills to the various peripheral tissues. This is Hemoglobin subunit beta (hbb) from Pogonophryne scotti (Saddleback plunderfish).